Reading from the N-terminus, the 385-residue chain is 1-deoxy-D-xylulose 5-phosphate reductoisomerase (385 aa).

NADPH-binding residues include T10, G11, S12, I13, and N124. Residue K125 participates in 1-deoxy-D-xylulose 5-phosphate binding. E126 is an NADPH binding site. Residue D150 coordinates Mn(2+). 1-deoxy-D-xylulose 5-phosphate contacts are provided by S151, E152, S176, and H199. E152 is a Mn(2+) binding site. G205 is a binding site for NADPH. 1-deoxy-D-xylulose 5-phosphate contacts are provided by S212, N217, K218, and E221. E221 provides a ligand contact to Mn(2+).

This sequence belongs to the DXR family. Mg(2+) serves as cofactor. Requires Mn(2+) as cofactor.

The enzyme catalyses 2-C-methyl-D-erythritol 4-phosphate + NADP(+) = 1-deoxy-D-xylulose 5-phosphate + NADPH + H(+). It functions in the pathway isoprenoid biosynthesis; isopentenyl diphosphate biosynthesis via DXP pathway; isopentenyl diphosphate from 1-deoxy-D-xylulose 5-phosphate: step 1/6. Functionally, catalyzes the NADPH-dependent rearrangement and reduction of 1-deoxy-D-xylulose-5-phosphate (DXP) to 2-C-methyl-D-erythritol 4-phosphate (MEP). The chain is 1-deoxy-D-xylulose 5-phosphate reductoisomerase from Clostridium kluyveri (strain NBRC 12016).